Reading from the N-terminus, the 1325-residue chain is RIMS-binding protein 2 (1325 aa).

The tract at residues 153-181 is disordered; it reads TFLSKSRSDTPRCRFDSDMDNDQNSNTSK. A compositionally biased stretch (basic and acidic residues) spans 158–169; the sequence is SRSDTPRCRFDS. Residues 186 to 253 enclose the SH3 1 domain; it reads GKVHLCIARY…PSNFVDFVQD (68 aa). Fibronectin type-III domains lie at 315 to 408, 411 to 493, and 507 to 608; these read VPYP…GKDV, APSN…KKEA, and PPQD…VPPS. Disordered regions lie at residues 601 to 778, 988 to 1010, and 1040 to 1090; these read SDLL…GSDL, DLGS…KKYE, and AAGP…SRPM. The span at 627–641 shows a compositional bias: basic and acidic residues; it reads ETKEEHLGPHLKIDE. Residues 664 to 676 are compositionally biased toward polar residues; that stretch reads FPSSLQGRRSPSP. A compositionally biased stretch (basic and acidic residues) spans 696–716; that stretch reads MAREAAQRVAESNRMERRSVF. Over residues 717-727 the composition is skewed to polar residues; the sequence is SERSNAAQYAN. Basic and acidic residues-rich tracts occupy residues 763–774 and 996–1010; these read CHGEDYHTESSR and PRSE…KKYE. 2 SH3 domains span residues 1121–1189 and 1225–1292; these read ISTR…EIQA and VSTR…EVPD.

It belongs to the RIMBP family. Interacts with RIMS1, RIMS2, CACNA1D and CACNA1B, and potentially with other Ca(2+) channel alpha-1 isoforms. Brain, cochlea and retina.

The protein resides in the cell membrane. It is found in the synapse. Its function is as follows. Plays a role in the synaptic transmission as bifunctional linker that interacts simultaneously with RIMS1, RIMS2, CACNA1D and CACNA1B. The protein is RIMS-binding protein 2 (RIMBP2) of Gallus gallus (Chicken).